The following is a 279-amino-acid chain: Urease accessory protein UreD (279 aa).

This sequence belongs to the UreD family. As to quaternary structure, ureD, UreF and UreG form a complex that acts as a GTP-hydrolysis-dependent molecular chaperone, activating the urease apoprotein by helping to assemble the nickel containing metallocenter of UreC. The UreE protein probably delivers the nickel.

It is found in the cytoplasm. Required for maturation of urease via the functional incorporation of the urease nickel metallocenter. The sequence is that of Urease accessory protein UreD from Nostoc punctiforme (strain ATCC 29133 / PCC 73102).